We begin with the raw amino-acid sequence, 240 residues long: Protein CDV3 homolog A (240 aa).

Basic and acidic residues predominate over residues 1–15 (MAEPQEKSLDDFFAK). Positions 1-204 (MAEPQEKSLD…TESRREKEME (204 aa)) are disordered. Ala-2 carries the post-translational modification N-acetylalanine. The segment covering 27–52 (SGSAAGSRGSARPPDGAPSSSSSMSG) has biased composition (low complexity). The segment covering 57 to 73 (VKKEKSGKSDNPDQLQE) has biased composition (basic and acidic residues). Composition is skewed to polar residues over residues 127-141 (DKSSGPWNKTSQAQA) and 181-192 (SDTQFPSLQATA). Positions 193-204 (KHTESRREKEME) are enriched in basic and acidic residues.

This sequence belongs to the CDV3 family.

It localises to the cytoplasm. The chain is Protein CDV3 homolog A (cdv3-a) from Xenopus laevis (African clawed frog).